The following is a 259-amino-acid chain: Flagellar brake protein YcgR (259 aa).

The region spanning 129–246 (QRREFYRLQT…DNAIQRYIFK (118 aa)) is the PilZ domain.

This sequence belongs to the YcgR family. In terms of assembly, monomer. Interacts with the flagellar basal bodies.

The protein localises to the bacterial flagellum basal body. In terms of biological role, acts as a flagellar brake, regulating swimming and swarming in a bis-(3'-5') cyclic diguanylic acid (c-di-GMP)-dependent manner. Binds 1 c-di-GMP dimer per subunit. Increasing levels of c-di-GMP lead to decreased motility. This chain is Flagellar brake protein YcgR, found in Azoarcus sp. (strain BH72).